The following is a 229-amino-acid chain: DNA polymerase III subunit epsilon (229 aa).

A divalent metal cation-binding residues include aspartate 10 and glutamate 12. Substrate-binding residues include aspartate 10, glutamate 12, aspartate 55, and histidine 60. Histidine 156 acts as the Proton acceptor in catalysis. Aspartate 161 lines the a divalent metal cation pocket. Residue aspartate 161 participates in substrate binding.

DNA polymerase III contains a core (composed of alpha, epsilon and theta chains) that associates with a tau subunit. This core dimerizes to form the POLIII' complex. PolIII' associates with the gamma complex (composed of gamma, delta, delta', psi and chi chains) and with the beta chain to form the complete DNA polymerase III complex. Mg(2+) serves as cofactor. The cofactor is Mn(2+).

The enzyme catalyses DNA(n) + a 2'-deoxyribonucleoside 5'-triphosphate = DNA(n+1) + diphosphate. Its function is as follows. DNA polymerase III is a complex, multichain enzyme responsible for most of the replicative synthesis in bacteria. The epsilon subunit contain the editing function and is a proofreading 3'-5' exonuclease. The polypeptide is DNA polymerase III subunit epsilon (dnaQ) (Rickettsia felis (strain ATCC VR-1525 / URRWXCal2) (Rickettsia azadi)).